Here is a 952-residue protein sequence, read N- to C-terminus: Isoleucine--tRNA ligase (952 aa).

Positions 58–68 (PYANGDIHIGH) match the 'HIGH' region motif. Glutamate 576 lines the L-isoleucyl-5'-AMP pocket. Residues 617 to 621 (KMSKS) carry the 'KMSKS' region motif. Lysine 620 contributes to the ATP binding site. Zn(2+) is bound by residues cysteine 915, cysteine 918, cysteine 935, and cysteine 938.

This sequence belongs to the class-I aminoacyl-tRNA synthetase family. IleS type 1 subfamily. As to quaternary structure, monomer. It depends on Zn(2+) as a cofactor.

The protein localises to the cytoplasm. It catalyses the reaction tRNA(Ile) + L-isoleucine + ATP = L-isoleucyl-tRNA(Ile) + AMP + diphosphate. Its function is as follows. Catalyzes the attachment of isoleucine to tRNA(Ile). As IleRS can inadvertently accommodate and process structurally similar amino acids such as valine, to avoid such errors it has two additional distinct tRNA(Ile)-dependent editing activities. One activity is designated as 'pretransfer' editing and involves the hydrolysis of activated Val-AMP. The other activity is designated 'posttransfer' editing and involves deacylation of mischarged Val-tRNA(Ile). The chain is Isoleucine--tRNA ligase from Aliivibrio fischeri (strain MJ11) (Vibrio fischeri).